Reading from the N-terminus, the 339-residue chain is Dihydroorotate dehydrogenase (quinone) (339 aa).

FMN contacts are provided by residues 62-66 (AGMDK) and T86. K66 lines the substrate pocket. Position 111–115 (111–115 (NRMGF)) interacts with substrate. FMN contacts are provided by N139 and N172. Substrate is bound at residue N172. The Nucleophile role is filled by S175. N177 is a binding site for substrate. 2 residues coordinate FMN: K217 and T245. 246-247 (NT) is a binding site for substrate. Residues G268, G297, and 318–319 (YS) each bind FMN.

It belongs to the dihydroorotate dehydrogenase family. Type 2 subfamily. Monomer. It depends on FMN as a cofactor.

The protein localises to the cell membrane. The catalysed reaction is (S)-dihydroorotate + a quinone = orotate + a quinol. The protein operates within pyrimidine metabolism; UMP biosynthesis via de novo pathway; orotate from (S)-dihydroorotate (quinone route): step 1/1. In terms of biological role, catalyzes the conversion of dihydroorotate to orotate with quinone as electron acceptor. The polypeptide is Dihydroorotate dehydrogenase (quinone) (Shewanella baltica (strain OS185)).